A 302-amino-acid polypeptide reads, in one-letter code: 4-hydroxy-tetrahydrodipicolinate synthase (302 aa).

Residue Thr-46 participates in pyruvate binding. Tyr-135 (proton donor/acceptor) is an active-site residue. The active-site Schiff-base intermediate with substrate is the Lys-164. Val-206 contacts pyruvate.

This sequence belongs to the DapA family. As to quaternary structure, homotetramer; dimer of dimers.

It localises to the cytoplasm. It catalyses the reaction L-aspartate 4-semialdehyde + pyruvate = (2S,4S)-4-hydroxy-2,3,4,5-tetrahydrodipicolinate + H2O + H(+). Its pathway is amino-acid biosynthesis; L-lysine biosynthesis via DAP pathway; (S)-tetrahydrodipicolinate from L-aspartate: step 3/4. In terms of biological role, catalyzes the condensation of (S)-aspartate-beta-semialdehyde [(S)-ASA] and pyruvate to 4-hydroxy-tetrahydrodipicolinate (HTPA). The protein is 4-hydroxy-tetrahydrodipicolinate synthase of Acidobacterium capsulatum (strain ATCC 51196 / DSM 11244 / BCRC 80197 / JCM 7670 / NBRC 15755 / NCIMB 13165 / 161).